Reading from the N-terminus, the 375-residue chain is Methylthioribose-1-phosphate isomerase (375 aa).

Residues 53–55 (RGA), R90, and Q202 each bind substrate. D243 acts as the Proton donor in catalysis. 253–254 (NK) provides a ligand contact to substrate.

Belongs to the eIF-2B alpha/beta/delta subunits family. MtnA subfamily.

It carries out the reaction 5-(methylsulfanyl)-alpha-D-ribose 1-phosphate = 5-(methylsulfanyl)-D-ribulose 1-phosphate. It functions in the pathway amino-acid biosynthesis; L-methionine biosynthesis via salvage pathway; L-methionine from S-methyl-5-thio-alpha-D-ribose 1-phosphate: step 1/6. In terms of biological role, catalyzes the interconversion of methylthioribose-1-phosphate (MTR-1-P) into methylthioribulose-1-phosphate (MTRu-1-P). This is Methylthioribose-1-phosphate isomerase from Rhodospirillum centenum (strain ATCC 51521 / SW).